A 149-amino-acid chain; its full sequence is Nucleoside diphosphate kinase (149 aa).

ATP is bound by residues K9, F57, R85, T91, R102, and N112. H115 acts as the Pros-phosphohistidine intermediate in catalysis.

Belongs to the NDK family. Homotetramer. Mg(2+) serves as cofactor.

It localises to the cytoplasm. It catalyses the reaction a 2'-deoxyribonucleoside 5'-diphosphate + ATP = a 2'-deoxyribonucleoside 5'-triphosphate + ADP. It carries out the reaction a ribonucleoside 5'-diphosphate + ATP = a ribonucleoside 5'-triphosphate + ADP. In terms of biological role, major role in the synthesis of nucleoside triphosphates other than ATP. The ATP gamma phosphate is transferred to the NDP beta phosphate via a ping-pong mechanism, using a phosphorylated active-site intermediate. This is Nucleoside diphosphate kinase from Desulforamulus reducens (strain ATCC BAA-1160 / DSM 100696 / MI-1) (Desulfotomaculum reducens).